We begin with the raw amino-acid sequence, 306 residues long: MSLANRLSHLNITGGNDFKASIGPSVGRQNEATNPWSSTSHSLENSAATVVNELQTTKEQKTPEQSTTANPLFPGNDFSDFNNHKSKLLGVITGKSTPSSQAEKSDTTNSKTGSTEELTETPADENAKQYMLESLLPIIRMEDSEMSTLQLGCDLAALGFDLAPVEEDRLISTNLFSPWAELNTKKPVSQPMFKLPACYKNVNPPPAISKIFQFSDETLFYIFYTMPRDVMQEAAAQELTNRNWRFHKELRVWLTPVPGMKPLQRTPQFERGYYMFFDPIHWKRIKKDFLLMYAALEDRAQSAVHS.

Disordered stretches follow at residues 1 to 44, 56 to 79, and 94 to 126; these read MSLA…HSLE, TTKE…NDFS, and GKST…ADEN. Residues 27 to 44 show a composition bias toward polar residues; it reads GRQNEATNPWSSTSHSLE. Polar residues predominate over residues 94–116; sequence GKSTPSSQAEKSDTTNSKTGSTE.

It belongs to the CNOT2/3/5 family.

The protein resides in the cytoplasm. It localises to the nucleus. Functionally, acts as a component of the CCR4-NOT core complex, which in the nucleus seems to be a general transcription factor, and in the cytoplasm the major mRNA deadenylase involved in mRNA turnover. NOT2 is required for the integrity of the complex. The NOT protein subcomplex negatively regulates the basal and activated transcription of many genes. Preferentially affects TC-type TATA element-dependent transcription. Could directly or indirectly inhibit component(s) of the general transcription machinery. The chain is General negative regulator of transcription subunit 2 (not2) from Schizosaccharomyces pombe (strain 972 / ATCC 24843) (Fission yeast).